An 848-amino-acid polypeptide reads, in one-letter code: Beta-galactosidase 11 (848 aa).

A signal peptide spans 1-23; the sequence is MSAAAVLAVVAAAVAALAAAASG. Asn-29 carries N-linked (GlcNAc...) asparagine glycosylation. Glu-189 (proton donor) is an active-site residue. Glu-260 functions as the Nucleophile in the catalytic mechanism. N-linked (GlcNAc...) asparagine glycans are attached at residues Asn-261, Asn-472, and Asn-783. One can recognise an SUEL-type lectin domain in the interval 750–837; that stretch reads GGLKPTAVLS…GTLAVQAKCS (88 aa).

This sequence belongs to the glycosyl hydrolase 35 family.

The protein resides in the secreted. It is found in the extracellular space. Its subcellular location is the apoplast. The enzyme catalyses Hydrolysis of terminal non-reducing beta-D-galactose residues in beta-D-galactosides.. The sequence is that of Beta-galactosidase 11 from Oryza sativa subsp. japonica (Rice).